Consider the following 190-residue polypeptide: 3-isopropylmalate dehydratase small subunit (190 aa).

Belongs to the LeuD family. LeuD type 1 subfamily. In terms of assembly, heterodimer of LeuC and LeuD.

The enzyme catalyses (2R,3S)-3-isopropylmalate = (2S)-2-isopropylmalate. It participates in amino-acid biosynthesis; L-leucine biosynthesis; L-leucine from 3-methyl-2-oxobutanoate: step 2/4. In terms of biological role, catalyzes the isomerization between 2-isopropylmalate and 3-isopropylmalate, via the formation of 2-isopropylmaleate. This chain is 3-isopropylmalate dehydratase small subunit, found in Staphylococcus aureus (strain MSSA476).